Here is a 388-residue protein sequence, read N- to C-terminus: Protein DVU_0534 (388 aa).

The next 10 helical transmembrane spans lie at 10-31 (LMTP…LTVL), 57-78 (LLCG…YLFG), 89-106 (AITT…ALNY), 130-144 (EVGL…VLFV), 166-191 (LTLV…LFLI), 199-222 (LWYS…SMVI), 254-265 (AASFVLAGYFMI), 291-306 (MLGF…ALGV), 316-328 (FASV…IVMN), and 354-368 (IGIS…ITVY).

This sequence belongs to the NrfD family.

It is found in the cell membrane. HMWC (high-molecular-weight cytochrome c), ORF2, ORF3, ORF4, ORF5 and ORF6 in the HMC operon form a transmembrane protein complex that allows electron flow from the periplasmic hydrogenase to the cytoplasmic enzymes that catalyze reduction of sulfates. This chain is Protein DVU_0534, found in Nitratidesulfovibrio vulgaris (strain ATCC 29579 / DSM 644 / CCUG 34227 / NCIMB 8303 / VKM B-1760 / Hildenborough) (Desulfovibrio vulgaris).